The sequence spans 70 residues: MSKEKKFEENLADLEVIVQKLENGDVALEEAIAEFQKGMKLSKELQASLDKAEKTLVKVMQADGTETEME.

It belongs to the XseB family. As to quaternary structure, heterooligomer composed of large and small subunits.

Its subcellular location is the cytoplasm. It carries out the reaction Exonucleolytic cleavage in either 5'- to 3'- or 3'- to 5'-direction to yield nucleoside 5'-phosphates.. Functionally, bidirectionally degrades single-stranded DNA into large acid-insoluble oligonucleotides, which are then degraded further into small acid-soluble oligonucleotides. The polypeptide is Exodeoxyribonuclease 7 small subunit (Streptococcus sanguinis (strain SK36)).